Reading from the N-terminus, the 715-residue chain is Methionine--tRNA ligase (715 aa).

The short motif at 20 to 30 is the 'HIGH' region element; sequence PYANGKAHIGH. Zn(2+)-binding residues include C151, C154, C163, and C167. The 'KMSKS' region motif lies at 334–338; that stretch reads KFSKT. ATP is bound at residue K337. The segment at 559 to 593 is disordered; it reads ANAKRNGVKGGEKEPSKSEGMGPSEASKASEKTVD. The region spanning 613–715 is the tRNA-binding domain; it reads DFAKLDIRVG…KEIKSGSRIR (103 aa).

This sequence belongs to the class-I aminoacyl-tRNA synthetase family. MetG type 1 subfamily. Homodimer. Zn(2+) serves as cofactor.

Its subcellular location is the cytoplasm. It carries out the reaction tRNA(Met) + L-methionine + ATP = L-methionyl-tRNA(Met) + AMP + diphosphate. Functionally, is required not only for elongation of protein synthesis but also for the initiation of all mRNA translation through initiator tRNA(fMet) aminoacylation. This is Methionine--tRNA ligase from Methanosarcina mazei (strain ATCC BAA-159 / DSM 3647 / Goe1 / Go1 / JCM 11833 / OCM 88) (Methanosarcina frisia).